Reading from the N-terminus, the 132-residue chain is Ubiquinol-cytochrome c reductase complex assembly factor 4 (132 aa).

The first 15 residues, 1 to 15 (MNRVLCAPAAGAVRA), serve as a signal peptide directing secretion. Over 16 to 78 (LRLIGWASRS…GKGHQRPWWK (63 aa)) the chain is Mitochondrial matrix. The tract at residues 29–72 (LPGSRDRAHPAAEEEDDPDRPIEFSSSKANPHRWSVGHTMGKGH) is disordered. Residues 79–95 (VLPLSCFLVALIIWCYL) form a helical membrane-spanning segment. Residues 96–132 (REESEADQWLRQVWGEVPEPSDRSEEPETPAAYRART) lie on the Mitochondrial intermembrane side of the membrane. Residues 110-132 (GEVPEPSDRSEEPETPAAYRART) are disordered.

The protein belongs to the UQCC4 family. In terms of assembly, forms a complex, named COMB/coordinator of mitochondrial CYTB biogenesis, composed of UQCC1, UQCC2, UQCC4, UQCC5 and UQCC6; stabilizes nascent cytochrome b/MT-CYB and promotes its membrane insertion. Forms a complex, named COMA, composed of UQCC1, UQCC2 and UQCC4; activates MT-CYB translation. Forms a complex, named COMC, composed of UQCC1, UQCC2; UQCC3 and UQCC4; mediates MT-CYB hemylation and association with the first nuclear-encoded complex III subunit UQCRQ. Complexes COMA and COMB are bound to the mitochondrion inner membrane by UQCC4.

It is found in the mitochondrion inner membrane. In terms of biological role, required for the assembly and stability of the mitochondrial ubiquinol-cytochrome c reductase complex (complex III (CIII) or cytochrome b-c1 complex), a multisubunit transmembrane complex that is part of the mitochondrial electron transport chain (ETC) which drives oxidative phosphorylation. The protein is Ubiquinol-cytochrome c reductase complex assembly factor 4 of Homo sapiens (Human).